Here is a 1437-residue protein sequence, read N- to C-terminus: Envelopment polyprotein (1437 aa).

The signal sequence occupies residues 1–21 (MAISTSLLIVALLIKLCLVNT). The Lumenal segment spans residues 22–207 (APPISKCFQD…GYMASSICQN (186 aa)). Asparagine 65 and asparagine 88 each carry an N-linked (GlcNAc...) asparagine; by host glycan. Residues 208 to 228 (IELIIIIILTLAIFIFMCIIT) form a helical membrane-spanning segment. Residues 229 to 312 (RTYICYLMLP…RVARSLCKSK (84 aa)) are Cytoplasmic-facing. The helical transmembrane segment at 313 to 333 (GSSLVISILTAMLILSFITPL) threads the bilayer. The Lumenal portion of the chain corresponds to 334-373 (EAMTTNYPDDKKFTLKEVNDIVLGRDMEQELKSSILILMS). The chain crosses the membrane as a helical span at residues 374–394 (ICGIGIILIFFGLTVLLEIVL). Residues 395-460 (ELIAKRSTIF…TYYIKIRNLK (66 aa)) are Cytoplasmic-facing. Residues 461-481 (LIMLIFSIVILMQNATMLVVA) traverse the membrane as a helical segment. The Lumenal portion of the chain corresponds to 482–1391 (GENCWTNTEI…EPLNNFFGNY (910 aa)). Asparagine 627 and asparagine 1173 each carry an N-linked (GlcNAc...) asparagine; by host glycan. A helical membrane pass occupies residues 1392–1412 (LNMFLYILGGIILLFLALYIL). Topologically, residues 1413–1437 (MPMCARLRDELKRNERLHQMEMKKR) are cytoplasmic.

It belongs to the orthobunyavirus envelope glycoprotein family. Glycoprotein C and Glycoprotein N interact with each other. Post-translationally, specific enzymatic cleavages in vivo yield mature proteins including nonstructural protein NSm, Glycoprotein C, and Glycoprotein N.

It localises to the virion membrane. Its subcellular location is the host Golgi apparatus membrane. The protein resides in the host endoplasmic reticulum membrane. In terms of biological role, glycoprotein C and Glycoprotein N interact with each other and are present at the surface of the virion. They are able to attach the virion to a cell receptor and to promote fusion of membranes after endocytosis of the virion. The polypeptide is Envelopment polyprotein (GP) (Culex).